A 99-amino-acid chain; its full sequence is Aspartyl/glutamyl-tRNA(Asn/Gln) amidotransferase subunit C (99 aa).

It belongs to the GatC family. Heterotrimer of A, B and C subunits.

The enzyme catalyses L-glutamyl-tRNA(Gln) + L-glutamine + ATP + H2O = L-glutaminyl-tRNA(Gln) + L-glutamate + ADP + phosphate + H(+). It carries out the reaction L-aspartyl-tRNA(Asn) + L-glutamine + ATP + H2O = L-asparaginyl-tRNA(Asn) + L-glutamate + ADP + phosphate + 2 H(+). In terms of biological role, allows the formation of correctly charged Asn-tRNA(Asn) or Gln-tRNA(Gln) through the transamidation of misacylated Asp-tRNA(Asn) or Glu-tRNA(Gln) in organisms which lack either or both of asparaginyl-tRNA or glutaminyl-tRNA synthetases. The reaction takes place in the presence of glutamine and ATP through an activated phospho-Asp-tRNA(Asn) or phospho-Glu-tRNA(Gln). The chain is Aspartyl/glutamyl-tRNA(Asn/Gln) amidotransferase subunit C from Rhodococcus erythropolis (strain PR4 / NBRC 100887).